Here is a 460-residue protein sequence, read N- to C-terminus: Glycine--tRNA ligase (460 aa).

The substrate site is built by arginine 98 and glutamate 172. ATP contacts are provided by residues 204 to 206, 214 to 219, 288 to 289, and 332 to 335; these read RNE, FRTREF, EL, and GADR. 219 to 223 contributes to the substrate binding site; that stretch reads FEQME. Residue 328-332 participates in substrate binding; sequence EPSLG.

This sequence belongs to the class-II aminoacyl-tRNA synthetase family. As to quaternary structure, homodimer.

The protein resides in the cytoplasm. It catalyses the reaction tRNA(Gly) + glycine + ATP = glycyl-tRNA(Gly) + AMP + diphosphate. Catalyzes the attachment of glycine to tRNA(Gly). This is Glycine--tRNA ligase from Geobacillus kaustophilus (strain HTA426).